A 158-amino-acid polypeptide reads, in one-letter code: uncharacterized protein (158 aa).

This is an uncharacterized protein from Mycobacterium tuberculosis (strain CDC 1551 / Oshkosh).